We begin with the raw amino-acid sequence, 338 residues long: uncharacterized protein (338 aa).

An N-terminal signal peptide occupies residues 1–29 (MIKQLCKNITICTLALSTTFTVLPATSFA).

Belongs to the aerolysin family.

This is an uncharacterized protein from Staphylococcus aureus (strain USA300).